Reading from the N-terminus, the 698-residue chain is UvrABC system protein B (698 aa).

The Helicase ATP-binding domain maps to 25–183 (NGLNSGLVHQ…TLIDLQFERN (159 aa)). 38-45 (GATGTGKT) is a binding site for ATP. The Beta-hairpin signature appears at 91 to 114 (YYDAYTPEAYVPSKDLYIEKEAQI). A Helicase C-terminal domain is found at 428 to 594 (QIDDLLGEIK…GIVKAVRDLT (167 aa)). The UVR domain occupies 622–657 (FKVINALEKQMKQAAKDLEFEKAALLRDQLTEMRQT).

It belongs to the UvrB family. As to quaternary structure, forms a heterotetramer with UvrA during the search for lesions. Interacts with UvrC in an incision complex.

It is found in the cytoplasm. Functionally, the UvrABC repair system catalyzes the recognition and processing of DNA lesions. A damage recognition complex composed of 2 UvrA and 2 UvrB subunits scans DNA for abnormalities. Upon binding of the UvrA(2)B(2) complex to a putative damaged site, the DNA wraps around one UvrB monomer. DNA wrap is dependent on ATP binding by UvrB and probably causes local melting of the DNA helix, facilitating insertion of UvrB beta-hairpin between the DNA strands. Then UvrB probes one DNA strand for the presence of a lesion. If a lesion is found the UvrA subunits dissociate and the UvrB-DNA preincision complex is formed. This complex is subsequently bound by UvrC and the second UvrB is released. If no lesion is found, the DNA wraps around the other UvrB subunit that will check the other stand for damage. The protein is UvrABC system protein B of Herpetosiphon aurantiacus (strain ATCC 23779 / DSM 785 / 114-95).